The primary structure comprises 227 residues: Phosphatidylethanolamine-binding protein 4 (227 aa).

An N-terminal signal peptide occupies residues 1-22; it reads MGWTMRLVTAALLLGLMMVVTG. N-linked (GlcNAc...) (complex) asparagine glycosylation occurs at N169. Residues 188-227 are important for secretion; it reads EPEASTQFMTQNYQDSPTLQAPRERASEPKHKNQAEIAAC. Residues 202-227 form a disordered region; that stretch reads DSPTLQAPRERASEPKHKNQAEIAAC. The segment covering 209-221 has biased composition (basic and acidic residues); the sequence is PRERASEPKHKNQ.

This sequence belongs to the phosphatidylethanolamine-binding protein family.

It localises to the secreted. In terms of biological role, promotes AKT phosphorylation, suggesting a possible role in the PI3K-AKT signaling pathway. This chain is Phosphatidylethanolamine-binding protein 4 (PEBP4), found in Homo sapiens (Human).